The chain runs to 278 residues: ATP synthase subunit a (278 aa).

6 helical membrane-spanning segments follow: residues 41–61 (FLNIDSLFFSFFLGIIFLLFF), 108–128 (LTIFVWLFLMNLMDLIPVDFV), 149–168 (INITLSMSLGVFLLILYFGI), 180–200 (FFFQPFNNYLLIPVNLVLELI), 222–242 (LIFILISGLLPWWLQWILSVP), and 244–264 (AIFHILIIILQAFIFMILTII).

This sequence belongs to the ATPase A chain family. As to quaternary structure, F-type ATPases have 2 components, CF(1) - the catalytic core - and CF(0) - the membrane proton channel. CF(1) has five subunits: alpha(3), beta(3), gamma(1), delta(1), epsilon(1). CF(0) has three main subunits: a(1), b(2) and c(9-12). The alpha and beta chains form an alternating ring which encloses part of the gamma chain. CF(1) is attached to CF(0) by a central stalk formed by the gamma and epsilon chains, while a peripheral stalk is formed by the delta and b chains.

It is found in the cell membrane. In terms of biological role, key component of the proton channel; it plays a direct role in the translocation of protons across the membrane. The protein is ATP synthase subunit a of Wigglesworthia glossinidia brevipalpis.